Reading from the N-terminus, the 320-residue chain is Lipoyl synthase (320 aa).

A disordered region spans residues 1–28; the sequence is MVTVVDRVTDRRLRHPEKAHRPDTSVQK. The span at 19-28 shows a compositional bias: basic and acidic residues; it reads AHRPDTSVQK. Residues Cys-59, Cys-64, Cys-70, Cys-85, Cys-89, Cys-92, and Ser-298 each contribute to the [4Fe-4S] cluster site. The 217-residue stretch at 71-287 folds into the Radical SAM core domain; it reads WSQRHASFMI…AKIGKVKGFL (217 aa).

This sequence belongs to the radical SAM superfamily. Lipoyl synthase family. The cofactor is [4Fe-4S] cluster.

The protein localises to the cytoplasm. It catalyses the reaction [[Fe-S] cluster scaffold protein carrying a second [4Fe-4S](2+) cluster] + N(6)-octanoyl-L-lysyl-[protein] + 2 oxidized [2Fe-2S]-[ferredoxin] + 2 S-adenosyl-L-methionine + 4 H(+) = [[Fe-S] cluster scaffold protein] + N(6)-[(R)-dihydrolipoyl]-L-lysyl-[protein] + 4 Fe(3+) + 2 hydrogen sulfide + 2 5'-deoxyadenosine + 2 L-methionine + 2 reduced [2Fe-2S]-[ferredoxin]. The protein operates within protein modification; protein lipoylation via endogenous pathway; protein N(6)-(lipoyl)lysine from octanoyl-[acyl-carrier-protein]: step 2/2. Functionally, catalyzes the radical-mediated insertion of two sulfur atoms into the C-6 and C-8 positions of the octanoyl moiety bound to the lipoyl domains of lipoate-dependent enzymes, thereby converting the octanoylated domains into lipoylated derivatives. This chain is Lipoyl synthase, found in Bartonella henselae (strain ATCC 49882 / DSM 28221 / CCUG 30454 / Houston 1) (Rochalimaea henselae).